The following is a 264-amino-acid chain: Thymidylate synthase (264 aa).

Arg-21 is a binding site for dUMP. His-51 is a (6R)-5,10-methylene-5,6,7,8-tetrahydrofolate binding site. DUMP is bound at residue 126-127 (RR). Cys-146 (nucleophile) is an active-site residue. DUMP is bound by residues 166–169 (RSCD), Asn-177, and 207–209 (HLY). Asp-169 is a binding site for (6R)-5,10-methylene-5,6,7,8-tetrahydrofolate. Ala-263 is a (6R)-5,10-methylene-5,6,7,8-tetrahydrofolate binding site.

It belongs to the thymidylate synthase family. Bacterial-type ThyA subfamily. In terms of assembly, homodimer.

It localises to the cytoplasm. The catalysed reaction is dUMP + (6R)-5,10-methylene-5,6,7,8-tetrahydrofolate = 7,8-dihydrofolate + dTMP. It participates in pyrimidine metabolism; dTTP biosynthesis. Catalyzes the reductive methylation of 2'-deoxyuridine-5'-monophosphate (dUMP) to 2'-deoxythymidine-5'-monophosphate (dTMP) while utilizing 5,10-methylenetetrahydrofolate (mTHF) as the methyl donor and reductant in the reaction, yielding dihydrofolate (DHF) as a by-product. This enzymatic reaction provides an intracellular de novo source of dTMP, an essential precursor for DNA biosynthesis. The protein is Thymidylate synthase of Shewanella oneidensis (strain ATCC 700550 / JCM 31522 / CIP 106686 / LMG 19005 / NCIMB 14063 / MR-1).